A 422-amino-acid polypeptide reads, in one-letter code: Inhibitor of growth protein 1 (422 aa).

Residues 261–349 are disordered; the sequence is ELGDTAGNSG…EASPADLPID (89 aa). Residue Lys278 forms a Glycyl lysine isopeptide (Lys-Gly) (interchain with G-Cter in SUMO2) linkage. Positions 297-314 are enriched in basic and acidic residues; that stretch reads RNNENRENASSNHDHDDG. A compositionally biased stretch (basic residues) spans 322 to 334; that stretch reads KKAKTSKKKKRSK. The PHD-type zinc finger occupies 353–402; it reads PTYCLCNQVSYGEMIGCDNDECPIEWFHFSCVGLNHKPKGKWYCPKCRGE. Zn(2+) is bound by residues Cys356, Cys358, Cys369, Cys374, His380, Cys383, Cys396, and Cys399. Residues 405–422 are PBR; that stretch reads KTMDKALEKSKKERAYNR.

The protein belongs to the ING family. As to quaternary structure, interacts with H3K4me3 and to a lesser extent with H3K4me2. Interacts with TP53. Isoform 2 interacts with RSL1D1. Isoform 2 was expressed in all normal tissues and cells examined, as well as in all breast cancer and melanoma cell lines examined. Isoform 3 was expressed in testis, liver, and kidney, weakly expressed in colon and brain and not expressed in breast and cultured melanocytes. Isoform 4 was highly expressed in testis and weakly expressed in brain, but not expressed in breast, colon, kidney, melanocytes, breast cancer or melanoma cell lines.

The protein localises to the nucleus. In terms of biological role, cooperates with p53/TP53 in the negative regulatory pathway of cell growth by modulating p53-dependent transcriptional activation. Implicated as a tumor suppressor gene. The protein is Inhibitor of growth protein 1 (ING1) of Homo sapiens (Human).